A 419-amino-acid polypeptide reads, in one-letter code: Equilibrative nucleotide transporter 5 (419 aa).

11 helical membrane-spanning segments follow: residues 20–40 (MVVC…LLSV), 56–76 (VLTF…AYNE), 86–106 (LIGY…DLAT), 108–128 (GHGG…FGFA), 142–162 (LMCP…GALT), 186–206 (IFLA…AYVF), 265–285 (YVVN…GFLY), 292–312 (GLGS…DLVG), 327–347 (KGLT…YFTA), 354–374 (WMIL…VCIL), and 393–413 (LVLF…LWLI).

This sequence belongs to the SLC29A/ENT transporter (TC 2.A.57) family.

The protein resides in the cell membrane. May be involved in nucleoside transport. In Arabidopsis thaliana (Mouse-ear cress), this protein is Equilibrative nucleotide transporter 5 (ENT5).